A 205-amino-acid chain; its full sequence is Small ribosomal subunit protein uS4 (205 aa).

The interval 1–46 (MSKRHSAKYKIDRRMGENLWGRPKSPVNQRSYGPGQHGQRRKQKVS) is disordered. The S4 RNA-binding domain occupies 94 to 154 (SRLDAIVYRA…EKSRNMALVL (61 aa)).

Belongs to the universal ribosomal protein uS4 family. As to quaternary structure, part of the 30S ribosomal subunit. Contacts protein S5. The interaction surface between S4 and S5 is involved in control of translational fidelity.

One of the primary rRNA binding proteins, it binds directly to 16S rRNA where it nucleates assembly of the body of the 30S subunit. In terms of biological role, with S5 and S12 plays an important role in translational accuracy. The protein is Small ribosomal subunit protein uS4 of Caulobacter sp. (strain K31).